The following is a 214-amino-acid chain: Proteasome subunit beta (214 aa).

The propeptide at 1 to 11 (MLDTSQEIMKG) is removed in mature form; by autocatalysis. Thr-12 serves as the catalytic Nucleophile.

This sequence belongs to the peptidase T1B family. As to quaternary structure, the 20S proteasome core is composed of 14 alpha and 14 beta subunits that assemble into four stacked heptameric rings, resulting in a barrel-shaped structure. The two inner rings, each composed of seven catalytic beta subunits, are sandwiched by two outer rings, each composed of seven alpha subunits. The catalytic chamber with the active sites is on the inside of the barrel. Has a gated structure, the ends of the cylinder being occluded by the N-termini of the alpha-subunits. Is capped at one or both ends by the proteasome regulatory ATPase, PAN.

Its subcellular location is the cytoplasm. It catalyses the reaction Cleavage of peptide bonds with very broad specificity.. The formation of the proteasomal ATPase PAN-20S proteasome complex, via the docking of the C-termini of PAN into the intersubunit pockets in the alpha-rings, triggers opening of the gate for substrate entry. Interconversion between the open-gate and close-gate conformations leads to a dynamic regulation of the 20S proteasome proteolysis activity. Functionally, component of the proteasome core, a large protease complex with broad specificity involved in protein degradation. This Methanoculleus marisnigri (strain ATCC 35101 / DSM 1498 / JR1) protein is Proteasome subunit beta.